Reading from the N-terminus, the 147-residue chain is Histone H2B (147 aa).

Residues 1–31 (MAPKAEKKPAEKKPAEEKKAVAEKAPAEKKP) are compositionally biased toward basic and acidic residues. The interval 1-55 (MAPKAEKKPAEKKPAEEKKAVAEKAPAEKKPKAGKKLPKEGGAAAGDKKKKRVKK) is disordered. Lysine 7, lysine 35, and lysine 36 each carry N6-acetyllysine. Residue lysine 143 forms a Glycyl lysine isopeptide (Lys-Gly) (interchain with G-Cter in ubiquitin) linkage.

This sequence belongs to the histone H2B family. The nucleosome is a histone octamer containing two molecules each of H2A, H2B, H3 and H4 assembled in one H3-H4 heterotetramer and two H2A-H2B heterodimers. The octamer wraps approximately 147 bp of DNA. In terms of processing, can be acetylated to form H2BK6ac, H2BK33ac and H2BK34ac. Monoubiquitinated to form H2BK143ub1; may give a specific tag for epigenetic transcriptional activation.

The protein resides in the nucleus. Its subcellular location is the chromosome. In terms of biological role, core component of nucleosome. Nucleosomes wrap and compact DNA into chromatin, limiting DNA accessibility to the cellular machineries which require DNA as a template. Histones thereby play a central role in transcription regulation, DNA repair, DNA replication and chromosomal stability. DNA accessibility is regulated via a complex set of post-translational modifications of histones, also called histone code, and nucleosome remodeling. The sequence is that of Histone H2B (HIS2B) from Gossypium hirsutum (Upland cotton).